We begin with the raw amino-acid sequence, 158 residues long: Ecotin (158 aa).

The signal sequence occupies residues Met-1–Ala-21. The cysteines at positions 67 and 104 are disulfide-linked.

The protein belongs to the protease inhibitor I11 (ecotin) family. Homodimer.

The protein localises to the periplasm. In terms of biological role, general inhibitor of family S1 serine proteases. The protein is Ecotin of Pseudomonas fluorescens (strain ATCC BAA-477 / NRRL B-23932 / Pf-5).